A 420-amino-acid chain; its full sequence is Pyridinium-3,5-bisthiocarboxylic acid mononucleotide nickel insertion protein (420 aa).

This sequence belongs to the LarC family.

The enzyme catalyses Ni(II)-pyridinium-3,5-bisthiocarboxylate mononucleotide = pyridinium-3,5-bisthiocarboxylate mononucleotide + Ni(2+). In terms of biological role, involved in the biosynthesis of a nickel-pincer cofactor ((SCS)Ni(II) pincer complex). Binds Ni(2+), and functions in nickel delivery to pyridinium-3,5-bisthiocarboxylic acid mononucleotide (P2TMN), to form the mature cofactor. Is required for the activation of the lactate racemase LarA. May also be involved in the activation of other nickel-pincer cofactor-dependent enzymes. The chain is Pyridinium-3,5-bisthiocarboxylic acid mononucleotide nickel insertion protein from Lactiplantibacillus plantarum (strain ATCC BAA-793 / NCIMB 8826 / WCFS1) (Lactobacillus plantarum).